We begin with the raw amino-acid sequence, 258 residues long: 6-phosphogluconolactonase (258 aa).

At Ala2 the chain carries N-acetylalanine. Ser49 bears the Phosphoserine mark. Lys180 is modified (N6-acetyllysine).

It belongs to the glucosamine/galactosamine-6-phosphate isomerase family. 6-phosphogluconolactonase subfamily.

It is found in the cytoplasm. It catalyses the reaction 6-phospho-D-glucono-1,5-lactone + H2O = 6-phospho-D-gluconate + H(+). It functions in the pathway carbohydrate degradation; pentose phosphate pathway; D-ribulose 5-phosphate from D-glucose 6-phosphate (oxidative stage): step 2/3. Hydrolysis of 6-phosphogluconolactone to 6-phosphogluconate. The sequence is that of 6-phosphogluconolactonase from Homo sapiens (Human).